A 375-amino-acid chain; its full sequence is Ribosomal RNA large subunit methyltransferase G (375 aa).

This sequence belongs to the methyltransferase superfamily. RlmG family.

It localises to the cytoplasm. The enzyme catalyses guanosine(1835) in 23S rRNA + S-adenosyl-L-methionine = N(2)-methylguanosine(1835) in 23S rRNA + S-adenosyl-L-homocysteine + H(+). Its function is as follows. Specifically methylates the guanine in position 1835 (m2G1835) of 23S rRNA. This chain is Ribosomal RNA large subunit methyltransferase G, found in Stutzerimonas stutzeri (strain A1501) (Pseudomonas stutzeri).